We begin with the raw amino-acid sequence, 672 residues long: uncharacterized protein (672 aa).

Residues 1–24 (MKTLKVLKIFIIVYISSVSLESFA) form the signal peptide. 2 consecutive transmembrane segments (helical) span residues 226–246 (IIGAALILYTMFFAFNMALNK) and 254–274 (ITLFIIKFLFVVYFSIGLGPL). Residues 363 to 372 (SNGTSGNNKP) show a composition bias toward polar residues. Residues 363 to 384 (SNGTSGNNKPIPNFDPDGKKDR) form a disordered region. A run of 4 helical transmembrane segments spans residues 410-430 (IILVAGMVFSVIFLSILLYFI), 436-456 (CMVTIYVMTYISPIFIPMVLF), 469-489 (VCISCALQPAVVAGFIALLIT), and 562-582 (VVSILAELLCVLIFSVIFYYF). Residues 628–646 (HGKSSLGDKPDIGNKRKDG) show a composition bias toward basic and acidic residues. The tract at residues 628–672 (HGKSSLGDKPDIGNKRKDGAQQGEDAVNSSGGEVADLASGSGGGK) is disordered.

Belongs to the TrbL/VirB6 family.

It localises to the cell membrane. This is an uncharacterized protein from Rickettsia prowazekii (strain Madrid E).